The chain runs to 1077 residues: ATP-dependent helicase/deoxyribonuclease subunit B (1077 aa).

The protein belongs to the helicase family. AddB/RexB type 2 subfamily. Heterodimer of AddA and RexB. Mg(2+) serves as cofactor.

In terms of biological role, the heterodimer acts as both an ATP-dependent DNA helicase and an ATP-dependent, dual-direction single-stranded exonuclease. Recognizes the chi site generating a DNA molecule suitable for the initiation of homologous recombination. This subunit has 5' -&gt; 3' nuclease activity but not helicase activity. This chain is ATP-dependent helicase/deoxyribonuclease subunit B, found in Streptococcus agalactiae serotype Ia (strain ATCC 27591 / A909 / CDC SS700).